A 637-amino-acid polypeptide reads, in one-letter code: Early transcription factor 70 kDa subunit (637 aa).

The Helicase ATP-binding domain maps to 32-185 (RTIIDENRSV…GHIIDLMSEE (154 aa)). 45 to 52 (HIMGSGKT) is a binding site for ATP. Positions 135-138 (DEAH) match the DEXH box motif. Residues 327-507 (KFKYFINRIQ…VLPFDIKKLL (181 aa)) enclose the Helicase C-terminal domain.

It belongs to the helicase family. VETF subfamily. As to quaternary structure, heterodimer of a 70 kDa and a 82 kDa subunit. Part of the early transcription complex composed of ETF, RAP94/OPG109, and the DNA-directed RNA polymerase.

Its subcellular location is the virion. Acts with RNA polymerase to initiate transcription from early gene promoters. Is recruited by the RPO-associated protein of 94 kDa RAP94/OPG109 to form the early transcription complex, which also contains the core RNA polymerase. ETF heterodimer binds to early gene promoters. The chain is Early transcription factor 70 kDa subunit (OPG118) from Homo sapiens (Human).